Reading from the N-terminus, the 304-residue chain is tRNA pseudouridine synthase B (304 aa).

Catalysis depends on aspartate 44, which acts as the Nucleophile.

It belongs to the pseudouridine synthase TruB family. Type 1 subfamily.

The catalysed reaction is uridine(55) in tRNA = pseudouridine(55) in tRNA. Responsible for synthesis of pseudouridine from uracil-55 in the psi GC loop of transfer RNAs. This Novosphingobium aromaticivorans (strain ATCC 700278 / DSM 12444 / CCUG 56034 / CIP 105152 / NBRC 16084 / F199) protein is tRNA pseudouridine synthase B.